Here is a 239-residue protein sequence, read N- to C-terminus: Small ribosomal subunit protein eS6B (239 aa).

Residues Ser148, Ser235, and Ser236 each carry the phosphoserine modification.

It belongs to the eukaryotic ribosomal protein eS6 family. Component of the small ribosomal subunit (SSU). Mature yeast ribosomes consist of a small (40S) and a large (60S) subunit. The 40S small subunit contains 1 molecule of ribosomal RNA (18S rRNA) and at least 33 different proteins. The large 60S subunit contains 3 rRNA molecules (25S, 5.8S and 5S rRNA) and at least 46 different proteins. Interacts with snoRNA U3. uS11 interacts with MPP10. Component of the ribosomal small subunit (SSU) processome composed of at least 40 protein subunits and snoRNA U3.

The protein localises to the cytoplasm. Component of the ribosome, a large ribonucleoprotein complex responsible for the synthesis of proteins in the cell. The small ribosomal subunit (SSU) binds messenger RNAs (mRNAs) and translates the encoded message by selecting cognate aminoacyl-transfer RNA (tRNA) molecules. The large subunit (LSU) contains the ribosomal catalytic site termed the peptidyl transferase center (PTC), which catalyzes the formation of peptide bonds, thereby polymerizing the amino acids delivered by tRNAs into a polypeptide chain. The nascent polypeptides leave the ribosome through a tunnel in the LSU and interact with protein factors that function in enzymatic processing, targeting, and the membrane insertion of nascent chains at the exit of the ribosomal tunnel. eS6 is involved in nucleolar processing of pre-18S ribosomal RNA and ribosome assembly. The protein is Small ribosomal subunit protein eS6B (rps602) of Schizosaccharomyces pombe (strain 972 / ATCC 24843) (Fission yeast).